The primary structure comprises 86 residues: uncharacterized protein (86 aa).

Residues 4 to 24 (LFFTLIAFVAIILLMSIGFII) traverse the membrane as a helical segment.

It localises to the membrane. This is an uncharacterized protein from Haemophilus influenzae (strain ATCC 51907 / DSM 11121 / KW20 / Rd).